Here is a 193-residue protein sequence, read N- to C-terminus: dTTP/UTP pyrophosphatase (193 aa).

Aspartate 77 (proton acceptor) is an active-site residue.

The protein belongs to the Maf family. YhdE subfamily. A divalent metal cation serves as cofactor.

The protein resides in the cytoplasm. The catalysed reaction is dTTP + H2O = dTMP + diphosphate + H(+). It catalyses the reaction UTP + H2O = UMP + diphosphate + H(+). Its function is as follows. Nucleoside triphosphate pyrophosphatase that hydrolyzes dTTP and UTP. May have a dual role in cell division arrest and in preventing the incorporation of modified nucleotides into cellular nucleic acids. In Bacteroides fragilis (strain ATCC 25285 / DSM 2151 / CCUG 4856 / JCM 11019 / LMG 10263 / NCTC 9343 / Onslow / VPI 2553 / EN-2), this protein is dTTP/UTP pyrophosphatase.